Consider the following 241-residue polypeptide: Phosphoadenosine 5'-phosphosulfate reductase (241 aa).

Catalysis depends on Cys235, which acts as the Nucleophile; cysteine thiosulfonate intermediate.

The protein belongs to the PAPS reductase family. CysH subfamily.

Its subcellular location is the cytoplasm. The catalysed reaction is [thioredoxin]-disulfide + sulfite + adenosine 3',5'-bisphosphate + 2 H(+) = [thioredoxin]-dithiol + 3'-phosphoadenylyl sulfate. Its pathway is sulfur metabolism; hydrogen sulfide biosynthesis; sulfite from sulfate: step 3/3. In terms of biological role, catalyzes the formation of sulfite from phosphoadenosine 5'-phosphosulfate (PAPS) using thioredoxin as an electron donor. In Xanthomonas oryzae pv. oryzae (strain MAFF 311018), this protein is Phosphoadenosine 5'-phosphosulfate reductase.